Here is a 313-residue protein sequence, read N- to C-terminus: Tyrosine recombinase slr0733 (313 aa).

In terms of domain architecture, Core-binding (CB) spans 7–101 (NNLSGLNQNI…AIKSLVNYAR (95 aa)). The region spanning 122 to 307 (RDTTGVSPTS…RHQHQAQITD (186 aa)) is the Tyr recombinase domain. Residues Arg162, Lys188, His258, Arg261, and His285 contribute to the active site. The active-site O-(3'-phospho-DNA)-tyrosine intermediate is Tyr294.

It belongs to the 'phage' integrase family.

The protein resides in the cytoplasm. Its function is as follows. Site-specific tyrosine recombinase, which acts by catalyzing the cutting and rejoining of the recombining DNA molecules. The polypeptide is Tyrosine recombinase slr0733 (Synechocystis sp. (strain ATCC 27184 / PCC 6803 / Kazusa)).